The chain runs to 329 residues: DNA-directed RNA polymerase subunit alpha (329 aa).

The tract at residues 1 to 235 (MQGSVTEFLK…EQLEAFVDLR (235 aa)) is alpha N-terminal domain (alpha-NTD). An alpha C-terminal domain (alpha-CTD) region spans residues 249 to 329 (FDPILLRPVD…NWPPASIADE (81 aa)).

The protein belongs to the RNA polymerase alpha chain family. Homodimer. The RNAP catalytic core consists of 2 alpha, 1 beta, 1 beta' and 1 omega subunit. When a sigma factor is associated with the core the holoenzyme is formed, which can initiate transcription.

It catalyses the reaction RNA(n) + a ribonucleoside 5'-triphosphate = RNA(n+1) + diphosphate. Functionally, DNA-dependent RNA polymerase catalyzes the transcription of DNA into RNA using the four ribonucleoside triphosphates as substrates. This Sodalis glossinidius (strain morsitans) protein is DNA-directed RNA polymerase subunit alpha.